A 176-amino-acid polypeptide reads, in one-letter code: Inorganic pyrophosphatase (176 aa).

Substrate-binding residues include Lys-30, Arg-44, and Tyr-56. Residues Asp-66, Asp-71, and Asp-103 each contribute to the Mg(2+) site. Tyr-140 is a binding site for substrate.

The protein belongs to the PPase family. Homohexamer. Mg(2+) is required as a cofactor.

It localises to the cytoplasm. The enzyme catalyses diphosphate + H2O = 2 phosphate + H(+). Its function is as follows. Catalyzes the hydrolysis of inorganic pyrophosphate (PPi) forming two phosphate ions. The polypeptide is Inorganic pyrophosphatase (Methanothermobacter thermautotrophicus (strain ATCC 29096 / DSM 1053 / JCM 10044 / NBRC 100330 / Delta H) (Methanobacterium thermoautotrophicum)).